Consider the following 93-residue polypeptide: uncharacterized protein (93 aa).

This is an uncharacterized protein from Bacillus subtilis (strain 168).